The sequence spans 110 residues: UPF0145 protein (110 aa).

The protein belongs to the UPF0145 family.

The chain is UPF0145 protein from Listeria ivanovii.